A 313-amino-acid polypeptide reads, in one-letter code: Dihydroorotate dehydrogenase B (NAD(+)), catalytic subunit (313 aa).

FMN is bound by residues Ser21 and 45–46 (KA). Substrate-binding positions include Lys45 and 69–73 (NAIGL). FMN is bound by residues Asn99 and Asn127. Asn127 is a binding site for substrate. The Nucleophile role is filled by Cys130. Residue Ile191 participates in FMN binding. 192 to 193 (NT) provides a ligand contact to substrate. FMN contacts are provided by residues Gly217, 243–244 (GG), and 265–266 (GT).

It belongs to the dihydroorotate dehydrogenase family. Type 1 subfamily. In terms of assembly, heterotetramer of 2 PyrK and 2 PyrD type B subunits. FMN serves as cofactor.

Its subcellular location is the cytoplasm. It carries out the reaction (S)-dihydroorotate + NAD(+) = orotate + NADH + H(+). The protein operates within pyrimidine metabolism; UMP biosynthesis via de novo pathway; orotate from (S)-dihydroorotate (NAD(+) route): step 1/1. Catalyzes the conversion of dihydroorotate to orotate with NAD(+) as electron acceptor. In Bacillus caldolyticus, this protein is Dihydroorotate dehydrogenase B (NAD(+)), catalytic subunit (pyrD).